The sequence spans 621 residues: MSAPTRRPAPDAPGAAGIAPAPPAPAAKPAAGKPKRIGPEQVTGAQSVIRSLEELGVEVIFGIPGGAVLPVYDPLFDSKKLRHVLVRHEQGAGHAASGYAHATGKVGVCMATSGPGATNLVTALADAQMDSIPVVAVTGQVGRTLIGTDAFQEADISGITMPITKHNFLVVRQRNPAVLAEAFHIAASGRPARCSVDIPKDVLQGQCTFSWPPRIHLPGYKPTTKPHSRQIRERAKLIAAARKPVLYVGGGVIRGEASEQLRELAELTGIPVVTTLMARGAFPDSHRQHLGMPGMHGTVAAVAALQRSDLLIALGTRFDDRVTGKLDTFAPEAKVIHADIDPAEIGKNRHADVPIVGDVKAVIAELVEILRHDGAPGNLDIADWWAYLDDVQSTYPLSYGPQSDGSLGPEYVIEKLGQIAGPDALYVAGVGHDQMWAAQFISYEKPRTWLNSGGQGTMGFAIPAAMGAKMGRPEAEVWAIDGDGCFQMTNQELATCAVEGIPIKVALINNGNLGMVRQWQTLFYEERYSQTDLGHPLAPHPDFVKLAEALGCVGLRCEREEDVVDVINAARAINDRPVVIAFIVGADAQVWPMVAAGTSNDEIQAARGIRPLFDDETEGTP.

Over residues 1–19 (MSAPTRRPAPDAPGAAGIA) the composition is skewed to low complexity. Positions 1-39 (MSAPTRRPAPDAPGAAGIAPAPPAPAAKPAAGKPKRIGP) are disordered. Glu-89 provides a ligand contact to thiamine diphosphate. FAD contacts are provided by residues Arg-190, 296-317 (HGTV…LGTR), and 339-358 (DIDP…IVGD). Residues 432-512 (HDQMWAAQFI…IKVALINNGN (81 aa)) are thiamine pyrophosphate binding. Residues Asp-483 and Asn-510 each coordinate Mg(2+).

The protein belongs to the TPP enzyme family. The cofactor is Mg(2+). Thiamine diphosphate is required as a cofactor.

It carries out the reaction 2 pyruvate + H(+) = (2S)-2-acetolactate + CO2. It functions in the pathway amino-acid biosynthesis; L-isoleucine biosynthesis; L-isoleucine from 2-oxobutanoate: step 1/4. The protein operates within amino-acid biosynthesis; L-valine biosynthesis; L-valine from pyruvate: step 1/4. This Mycobacterium avium protein is Acetolactate synthase (ilvB).